A 292-amino-acid polypeptide reads, in one-letter code: Claudin-23 (292 aa).

The Cytoplasmic segment spans residues 1 to 3 (MRT). Residues 4 to 24 (PVVMTLGMVLAPCGLLLNLTG) form a helical membrane-spanning segment. The Extracellular segment spans residues 25–81 (TLAPGWRLVKGFLNQPVDVELYQGLWDMCREQSSRERECGQTDQWGYFEAQPVLVAR). A helical transmembrane segment spans residues 82-102 (ALMVTSLAATVLGLLLASLGV). Over 103–110 (RCWQDEPN) the chain is Cytoplasmic. Residues 111–131 (FVLAGLSGVVLFVAGLLGLIP) form a helical membrane-spanning segment. The Extracellular portion of the chain corresponds to 132-160 (VSWYNHFLGDRDVLPAPASPVTVQVSYSL). A helical transmembrane segment spans residues 161–181 (VLGYLGSCLLLLGGFSLALSF). Residues 182–292 (APWCDERCRR…DSSLPCDSDL (111 aa)) lie on the Cytoplasmic side of the membrane. The tract at residues 222–292 (KYYSDGQHRP…DSSLPCDSDL (71 aa)) is disordered. A compositionally biased stretch (polar residues) spans 273–282 (DAPSCSTHPC).

This sequence belongs to the claudin family. Expressed in germinal center B-cells, placenta, stomach as well as in colon tumor.

It is found in the cell junction. Its subcellular location is the tight junction. The protein resides in the cell membrane. Functionally, plays a major role in tight junction-specific obliteration of the intercellular space, through calcium-independent cell-adhesion activity. In Homo sapiens (Human), this protein is Claudin-23 (CLDN23).